Consider the following 32-residue polypeptide: ilv operon leader peptide (32 aa).

The polypeptide is ilv operon leader peptide (ilvL) (Yersinia pestis).